The following is a 218-amino-acid chain: Putative copper transporter crmD (218 aa).

Transmembrane regions (helical) follow at residues 37–57 (YSLTLLFLFALAVFNRFLGVL) and 176–196 (MLAVMTFNVGVLCAVVGGIVV).

Belongs to the copper transporter (Ctr) (TC 1.A.56) family. SLC31A subfamily.

It localises to the membrane. It catalyses the reaction Cu(2+)(in) = Cu(2+)(out). Functionally, putative copper transporter; part of the crm gene cluster that mediates the biosynthesis of a yet unidentified copper-responsive metabolite. Probably involved in the transport of copper, even if it does not act as a major copper transporter. In contrast to crmA, is not involved in the biosynthesis of fumivalines or fumicicolins. This is Putative copper transporter crmD from Aspergillus fumigatus (strain ATCC MYA-4609 / CBS 101355 / FGSC A1100 / Af293) (Neosartorya fumigata).